We begin with the raw amino-acid sequence, 389 residues long: S-adenosylmethionine synthase 2 (389 aa).

Residue histidine 17 coordinates ATP. Aspartate 19 is a Mg(2+) binding site. Glutamate 45 serves as a coordination point for K(+). Residues glutamate 58 and glutamine 102 each contribute to the L-methionine site. The flexible loop stretch occupies residues 102–112 (QSADIAVGVDA). ATP-binding positions include 166-168 (DSK), 231-232 (RF), aspartate 240, 246-247 (RK), alanine 263, and lysine 267. Aspartate 240 is a binding site for L-methionine. Lysine 271 is an L-methionine binding site.

Belongs to the AdoMet synthase family. As to quaternary structure, homotetramer; dimer of dimers. Mg(2+) serves as cofactor. The cofactor is K(+).

The protein resides in the cytoplasm. The catalysed reaction is L-methionine + ATP + H2O = S-adenosyl-L-methionine + phosphate + diphosphate. It participates in amino-acid biosynthesis; S-adenosyl-L-methionine biosynthesis; S-adenosyl-L-methionine from L-methionine: step 1/1. Catalyzes the formation of S-adenosylmethionine (AdoMet) from methionine and ATP. The overall synthetic reaction is composed of two sequential steps, AdoMet formation and the subsequent tripolyphosphate hydrolysis which occurs prior to release of AdoMet from the enzyme. The protein is S-adenosylmethionine synthase 2 of Rhodospirillum rubrum (strain ATCC 11170 / ATH 1.1.1 / DSM 467 / LMG 4362 / NCIMB 8255 / S1).